Consider the following 132-residue polypeptide: Large-conductance mechanosensitive channel (132 aa).

A run of 3 helical transmembrane segments spans residues 14–34, 38–58, and 67–87; these read VVDL…VSSL, IITP…LHFG, and GNFI…FMFV.

This sequence belongs to the MscL family. In terms of assembly, homopentamer.

The protein localises to the cell membrane. Channel that opens in response to stretch forces in the membrane lipid bilayer. May participate in the regulation of osmotic pressure changes within the cell. This Bacillus cereus (strain ATCC 10987 / NRS 248) protein is Large-conductance mechanosensitive channel.